The chain runs to 176 residues: Peptidyl-prolyl cis-trans isomerase CYP19-3 (176 aa).

The region spanning 7–170 (FFDILIGKMK…ERVVIEDCGE (164 aa)) is the PPIase cyclophilin-type domain.

The protein belongs to the cyclophilin-type PPIase family. In terms of tissue distribution, ubiquitous, with highest levels in flowers and lowest levels in roots.

The protein resides in the cytoplasm. The enzyme catalyses [protein]-peptidylproline (omega=180) = [protein]-peptidylproline (omega=0). Its activity is regulated as follows. Binds cyclosporin A (CsA). CsA mediates some of its effects via an inhibitory action on PPIase. Functionally, PPIases accelerate the folding of proteins. It catalyzes the cis-trans isomerization of proline imidic peptide bonds in oligopeptides. This Arabidopsis thaliana (Mouse-ear cress) protein is Peptidyl-prolyl cis-trans isomerase CYP19-3 (CYP19-3).